The chain runs to 127 residues: Small ribosomal subunit protein uS11 (127 aa).

Belongs to the universal ribosomal protein uS11 family. In terms of assembly, part of the 30S ribosomal subunit. Interacts with proteins S7 and S18. Binds to IF-3.

In terms of biological role, located on the platform of the 30S subunit, it bridges several disparate RNA helices of the 16S rRNA. Forms part of the Shine-Dalgarno cleft in the 70S ribosome. The sequence is that of Small ribosomal subunit protein uS11 from Chlorobaculum parvum (strain DSM 263 / NCIMB 8327) (Chlorobium vibrioforme subsp. thiosulfatophilum).